A 98-amino-acid polypeptide reads, in one-letter code: NADH-ubiquinone oxidoreductase chain 4L (98 aa).

The next 3 membrane-spanning stretches (helical) occupy residues 1-21, 29-49, and 61-81; these read MPYIYMNITLAFVISLIGTLM, SLLCLEGMMLSLFTLNALLSL, and LILLVFAACEAAVGLALLIMI.

Belongs to the complex I subunit 4L family. As to quaternary structure, core subunit of respiratory chain NADH dehydrogenase (Complex I) which is composed of 45 different subunits.

The protein localises to the mitochondrion inner membrane. It carries out the reaction a ubiquinone + NADH + 5 H(+)(in) = a ubiquinol + NAD(+) + 4 H(+)(out). Functionally, core subunit of the mitochondrial membrane respiratory chain NADH dehydrogenase (Complex I) which catalyzes electron transfer from NADH through the respiratory chain, using ubiquinone as an electron acceptor. Part of the enzyme membrane arm which is embedded in the lipid bilayer and involved in proton translocation. This Mammuthus primigenius (Siberian woolly mammoth) protein is NADH-ubiquinone oxidoreductase chain 4L (MT-ND4L).